The primary structure comprises 484 residues: Probable autolysin PH (484 aa).

In terms of domain architecture, Peptidase C51 spans 5–148 (KNQAEKWFDN…YYDDPMYFIR (144 aa)). A MurNAc-LAA domain is found at 181–363 (IMLVAGHGYN…YSKLIAGAIH (183 aa)). An SH3b domain is found at 402-472 (KETGYYTVAN…IATGEVDKAG (71 aa)).

It catalyses the reaction Hydrolyzes the link between N-acetylmuramoyl residues and L-amino acid residues in certain cell-wall glycopeptides.. Has weak lytic activity toward S.aureus cells. Full-length protein has no activity, but fusion of the Peptidase C51 domain to the lysostaphin SH3 cell wall binding domain yields an active chimeric enzyme, suggesting that PH may be functional. The protein is Probable autolysin PH of Staphylococcus aureus (strain NCTC 8325 / PS 47).